A 134-amino-acid polypeptide reads, in one-letter code: ATP synthase epsilon chain (134 aa).

This sequence belongs to the ATPase epsilon chain family. F-type ATPases have 2 components, CF(1) - the catalytic core - and CF(0) - the membrane proton channel. CF(1) has five subunits: alpha(3), beta(3), gamma(1), delta(1), epsilon(1). CF(0) has three main subunits: a, b and c.

It is found in the cell membrane. Produces ATP from ADP in the presence of a proton gradient across the membrane. This chain is ATP synthase epsilon chain, found in Alkaliphilus metalliredigens (strain QYMF).